A 266-amino-acid chain; its full sequence is uncharacterized protein (266 aa).

One can recognise a PH domain in the interval 35 to 131; the sequence is VLVGEGVLVK…WMLHIERCVT (97 aa). An FYVE-type zinc finger spans residues 152-212; that stretch reads DGEAVKCMVC…VCDHCFDSLS (61 aa). Zn(2+) is bound by residues Cys158, Cys161, Cys175, Cys178, Cys183, Cys186, Cys204, and Cys207. The tract at residues 213–266 is disordered; sequence SATPGQEESEPKTGNRLHHEDSSSDSEDEVNGSGRSSNESRPTFYREDVQQPAT. Composition is skewed to basic and acidic residues over residues 221–234 and 256–266; these read SEPK…HEDS and FYREDVQQPAT.

This is an uncharacterized protein from Caenorhabditis elegans.